Reading from the N-terminus, the 124-residue chain is Fluoride-specific ion channel FluC (124 aa).

4 consecutive transmembrane segments (helical) span residues 4–24 (YLVI…TGVY), 36–56 (GTLI…ILFL), 63–83 (PLWR…LSSI), and 100–120 (LLNI…GIVL). Residues G75 and T78 each contribute to the Na(+) site.

This sequence belongs to the fluoride channel Fluc/FEX (TC 1.A.43) family.

The protein resides in the cell inner membrane. It catalyses the reaction fluoride(in) = fluoride(out). Its activity is regulated as follows. Na(+) is not transported, but it plays an essential structural role and its presence is essential for fluoride channel function. Functionally, fluoride-specific ion channel. Important for reducing fluoride concentration in the cell, thus reducing its toxicity. The sequence is that of Fluoride-specific ion channel FluC from Sulfurihydrogenibium sp. (strain YO3AOP1).